A 175-amino-acid chain; its full sequence is MAPTVMASSATSVAPFQGLKSTAGLPVSRRSTNSGFGNVSNGGRIKCMQVWPIEGIKKFETLSYLPPLTVEDLLKQIEYLLRSKWVPCLEFSKVGFVYRENHRSPGYYDGRYWTMWKLPMFGCTDATQVLKELEEAKKAYPDAFVRIIGFDNVRQVQLISFIAYKPPGCEESGGN.

The transit peptide at 1–46 (MAPTVMASSATSVAPFQGLKSTAGLPVSRRSTNSGFGNVSNGGRIK) directs the protein to the chloroplast.

This sequence belongs to the RuBisCO small chain family. In terms of assembly, heterohexadecamer of 8 large and 8 small subunits.

The protein localises to the plastid. Its subcellular location is the chloroplast. Its function is as follows. RuBisCO catalyzes two reactions: the carboxylation of D-ribulose 1,5-bisphosphate, the primary event in carbon dioxide fixation, as well as the oxidative fragmentation of the pentose substrate. Both reactions occur simultaneously and in competition at the same active site. Although the small subunit is not catalytic it is essential for maximal activity. This is Ribulose bisphosphate carboxylase small subunit, chloroplastic 2 from Oryza sativa subsp. japonica (Rice).